The chain runs to 315 residues: Methionyl-tRNA formyltransferase (315 aa).

Residue 113 to 116 (SLLP) participates in (6S)-5,6,7,8-tetrahydrofolate binding.

It belongs to the Fmt family.

The enzyme catalyses L-methionyl-tRNA(fMet) + (6R)-10-formyltetrahydrofolate = N-formyl-L-methionyl-tRNA(fMet) + (6S)-5,6,7,8-tetrahydrofolate + H(+). Functionally, attaches a formyl group to the free amino group of methionyl-tRNA(fMet). The formyl group appears to play a dual role in the initiator identity of N-formylmethionyl-tRNA by promoting its recognition by IF2 and preventing the misappropriation of this tRNA by the elongation apparatus. The chain is Methionyl-tRNA formyltransferase from Escherichia coli O127:H6 (strain E2348/69 / EPEC).